A 1204-amino-acid polypeptide reads, in one-letter code: Cingulin (1204 aa).

The tract at residues 7-357 (MAEPRGPVDH…GVISSGSSKA (351 aa)) is head. Positions 25–48 (EPVSGAEMGTLRRGGRRPAKDARA) are disordered. Residues 48 to 62 (ASTYGVAVRVQGIAG) carry the ZIM motif. The interaction with TJP1/ZO1 stretch occupies residues 54–67 (AVRVQGIAGQPFVV). Disordered regions lie at residues 68-174 (LNSG…DTAP) and 186-266 (DGQL…FSRA). Positions 93–119 (ALSSDSELPENPYSQVQGFPAPSQSST) are enriched in polar residues. 10 positions are modified to phosphoserine: Ser95, Ser96, Ser98, Ser135, Ser137, Ser140, Ser155, Ser165, Ser214, and Ser217. Residues 207–231 (EQRKRSKSLDSRLPRDTLEERERQS) are compositionally biased toward basic and acidic residues. Residues 232 to 245 (TNHWNPSTKYNNHV) show a composition bias toward polar residues. Positions 247 to 261 (SLKQPAQSPSPSPLS) are enriched in low complexity. Residues Ser258, Ser276, Ser338, and Ser351 each carry the phosphoserine modification. A coiled-coil region spans residues 358-1161 (MAGQGELARK…SLEKDSWRKA (804 aa)). Positions 379–398 (VKKRQKLEPSRAGLERQLEE) are disordered. Lys579 carries the N6-acetyllysine modification. The interval 1161 to 1182 (ASRSAAESALKHEGLSSDEEFD) is disordered. Positions 1162 to 1204 (SRSAAESALKHEGLSSDEEFDSVYDPSSIASLLTESNLQTSSC) are tail. Phosphoserine is present on residues Ser1176, Ser1177, and Ser1183.

The protein belongs to the cingulin family. Homodimer. Interacts with TJP1/ZO1 and SPEF1.

It localises to the cell junction. Its subcellular location is the tight junction. Functionally, probably plays a role in the formation and regulation of the tight junction (TJ) paracellular permeability barrier. The chain is Cingulin from Plecturocebus moloch (Dusky titi monkey).